Consider the following 751-residue polypeptide: Protein CLMP1 (751 aa).

Residues 1-11 show a composition bias toward basic residues; sequence MGKSGGRKKKS. Residues 1–33 are disordered; sequence MGKSGGRKKKSGGSNSNSSQVNSSETSGLSKPS. Low complexity predominate over residues 12–28; it reads GGSNSNSSQVNSSETSG. TPR repeat units lie at residues 51 to 84, 89 to 124, and 125 to 158; these read AHELKEEGNKKFQARDYVGALEQYENGIKLIPKS, AVFHSNRAACLMQMKPIDYESVISECSMALKSQPGF, and TRALLRRARAFEAVGKFDLAVQDVNVLLGSDPNH. In terms of domain architecture, PB1 spans 290 to 382; sequence WRPLKFVYDH…GMLRLHVVDV (93 aa). Residues 386–443 form a disordered region; sequence QEPMLLEEEEEEVEEKPVIEEVISSPTESLSETEINTEKTDKEVEKEKASSSEDPETK. Acidic residues predominate over residues 390–399; the sequence is LLEEEEEEVE. Positions 409 to 419 are enriched in polar residues; the sequence is SSPTESLSETE. Over residues 421 to 443 the composition is skewed to basic and acidic residues; that stretch reads NTEKTDKEVEKEKASSSEDPETK. TPR repeat units follow at residues 434 to 468, 481 to 514, and 536 to 570; these read ASSSEDPETKELEMDDWLFDFAHLFRTHVGIDPDA, SEALEETVTSEKAQPLFDKASAKFQEVAALAFFN, and EVVAAQLQTAYEWVKERYTLAKEKYEQALSIKPDF. Over residues 630–648 the composition is skewed to basic and acidic residues; it reads EQRMDDLKNPNSNKKEEVS. A disordered region spans residues 630-663; it reads EQRMDDLKNPNSNKKEEVSKRRKKQGGDGNEEVS.

In terms of assembly, interacts with myosin XI-K. In terms of tissue distribution, expressed in roots, stems, leaves, apex, flowers and seeds. Detected throughout the petiole in juvenile and young leaves, but restricted to the petiole midvein in older leaves. Expressed in hydathodes, at the base of the trichome, in the vascular cylinder of primary root and lateral root, in emerging lateral root primordia, in pollen and in developing embryos, but not in mature embryos.

Its subcellular location is the cytoplasm. In terms of biological role, required for plastid separation and partitioning during cell division. Not involved in plastid constriction or in the organization of cytoplasmic actin cables. Contributes to polar growth of root hairs. This Arabidopsis thaliana (Mouse-ear cress) protein is Protein CLMP1.